The following is a 163-amino-acid chain: Xanthine-guanine phosphoribosyltransferase (163 aa).

Residues 43 to 44 and 95 to 103 contribute to the 5-phospho-alpha-D-ribose 1-diphosphate site; these read RG and DDLVDTGGT. Asp96 lines the Mg(2+) pocket. Guanine contacts are provided by Asp99 and Ile142. The xanthine site is built by Asp99 and Ile142. Residues 99–103 and 141–142 each bind GMP; these read DTGGT and WI.

The protein belongs to the purine/pyrimidine phosphoribosyltransferase family. XGPT subfamily. As to quaternary structure, homotetramer. It depends on Mg(2+) as a cofactor.

It is found in the cell inner membrane. It catalyses the reaction GMP + diphosphate = guanine + 5-phospho-alpha-D-ribose 1-diphosphate. It carries out the reaction XMP + diphosphate = xanthine + 5-phospho-alpha-D-ribose 1-diphosphate. The enzyme catalyses IMP + diphosphate = hypoxanthine + 5-phospho-alpha-D-ribose 1-diphosphate. The protein operates within purine metabolism; GMP biosynthesis via salvage pathway; GMP from guanine: step 1/1. It participates in purine metabolism; XMP biosynthesis via salvage pathway; XMP from xanthine: step 1/1. In terms of biological role, purine salvage pathway enzyme that catalyzes the transfer of the ribosyl-5-phosphate group from 5-phospho-alpha-D-ribose 1-diphosphate (PRPP) to the N9 position of the 6-oxopurines guanine and xanthine to form the corresponding ribonucleotides GMP (guanosine 5'-monophosphate) and XMP (xanthosine 5'-monophosphate), with the release of PPi. To a lesser extent, also acts on hypoxanthine. In Nitratidesulfovibrio vulgaris (strain DP4) (Desulfovibrio vulgaris), this protein is Xanthine-guanine phosphoribosyltransferase.